Reading from the N-terminus, the 337-residue chain is DNA-directed RNA polymerase subunit alpha (337 aa).

The alpha N-terminal domain (alpha-NTD) stretch occupies residues 1-231 (MRNITTSAYT…KQLSVFDKIT (231 aa)). The tract at residues 247–337 (ENTKLLQNIT…IAELKAQNEG (91 aa)) is alpha C-terminal domain (alpha-CTD).

It belongs to the RNA polymerase alpha chain family. In terms of assembly, homodimer. The RNAP catalytic core consists of 2 alpha, 1 beta, 1 beta' and 1 omega subunit. When a sigma factor is associated with the core the holoenzyme is formed, which can initiate transcription.

The catalysed reaction is RNA(n) + a ribonucleoside 5'-triphosphate = RNA(n+1) + diphosphate. Its function is as follows. DNA-dependent RNA polymerase catalyzes the transcription of DNA into RNA using the four ribonucleoside triphosphates as substrates. This Campylobacter jejuni subsp. jejuni serotype O:2 (strain ATCC 700819 / NCTC 11168) protein is DNA-directed RNA polymerase subunit alpha.